We begin with the raw amino-acid sequence, 207 residues long: Keratin-associated protein 27-1 (207 aa).

The interval 184–207 (QLLESSPGVEPTCCVTGGSQLPSK) is disordered.

It belongs to the PMG family. In terms of assembly, interacts with hair keratins.

In the hair cortex, hair keratin intermediate filaments are embedded in an interfilamentous matrix, consisting of hair keratin-associated proteins (KRTAP), which are essential for the formation of a rigid and resistant hair shaft through their extensive disulfide bond cross-linking with abundant cysteine residues of hair keratins. The matrix proteins include the high-sulfur and high-glycine-tyrosine keratins. The sequence is that of Keratin-associated protein 27-1 (KRTAP27-1) from Homo sapiens (Human).